A 120-amino-acid polypeptide reads, in one-letter code: Prophage bactoprenol-linked glucose translocase homolog (120 aa).

The Cytoplasmic segment spans residues 1–9; sequence MLKLFAKYT. The chain crosses the membrane as a helical span at residues 10-30; the sequence is SIGVLNTLIHWVVFGVCIYVA. The Periplasmic segment spans residues 31–33; sequence HTN. The helical transmembrane segment at 34-54 threads the bilayer; the sequence is QALANFAGFVVAVSFSFFANA. The Cytoplasmic segment spans residues 55-64; that stretch reads KFTFKASTTT. The helical transmembrane segment at 65–85 threads the bilayer; it reads MRYMLYVGFMGTLSATVGWAA. The Periplasmic segment spans residues 86–88; the sequence is DRC. Residues 89-109 traverse the membrane as a helical segment; that stretch reads ALPPMITLVTFSAISLVCGFV. Residues 110-120 lie on the Cytoplasmic side of the membrane; sequence YSKFIVFRDAK.

This sequence belongs to the GtrA family.

It is found in the cell inner membrane. In terms of biological role, involved in O antigen modification. Involved in the translocation of bactoprenol-linked glucose across the cytoplasmic membrane. The protein is Prophage bactoprenol-linked glucose translocase homolog (yfdG) of Escherichia coli (strain K12).